Consider the following 431-residue polypeptide: Glucose-1-phosphate adenylyltransferase (431 aa).

Lys-39 serves as a coordination point for beta-D-fructose 1,6-bisphosphate. 3 residues coordinate AMP: Arg-40, His-46, and Arg-52. Tyr-114 contributes to the alpha-D-glucose 1-phosphate binding site. An AMP-binding site is contributed by Arg-130. Alpha-D-glucose 1-phosphate-binding positions include Gly-179, 194-195 (EK), and Ser-212. Glu-370 and Arg-386 together coordinate AMP. Residues 419–423 (REMLR) and 429–431 (QER) contribute to the beta-D-fructose 1,6-bisphosphate site.

The protein belongs to the bacterial/plant glucose-1-phosphate adenylyltransferase family. As to quaternary structure, homotetramer.

It carries out the reaction alpha-D-glucose 1-phosphate + ATP + H(+) = ADP-alpha-D-glucose + diphosphate. Its pathway is glycan biosynthesis; glycogen biosynthesis. Its activity is regulated as follows. Allosterically activated by fructose-1,6-bisphosphate (F16BP) and inhibited by AMP. In terms of biological role, involved in the biosynthesis of ADP-glucose, a building block required for the elongation reactions to produce glycogen. Catalyzes the reaction between ATP and alpha-D-glucose 1-phosphate (G1P) to produce pyrophosphate and ADP-Glc. This Salmonella paratyphi A (strain ATCC 9150 / SARB42) protein is Glucose-1-phosphate adenylyltransferase.